The sequence spans 247 residues: Carboxy-S-adenosyl-L-methionine synthase (247 aa).

S-adenosyl-L-methionine is bound by residues Y40, 65–67 (GSS), 90–91 (DN), 122–123 (DI), N137, and R204.

The protein belongs to the class I-like SAM-binding methyltransferase superfamily. Cx-SAM synthase family. As to quaternary structure, homodimer.

It carries out the reaction prephenate + S-adenosyl-L-methionine = carboxy-S-adenosyl-L-methionine + 3-phenylpyruvate + H2O. Functionally, catalyzes the conversion of S-adenosyl-L-methionine (SAM) to carboxy-S-adenosyl-L-methionine (Cx-SAM). In Pseudomonas syringae pv. syringae (strain B728a), this protein is Carboxy-S-adenosyl-L-methionine synthase.